The primary structure comprises 567 residues: Urease subunit alpha 1 (567 aa).

The 440-residue stretch at 128 to 567 (GAVDTHVHYI…LPLAQLYHLF (440 aa)) folds into the Urease domain. Residues H133, H135, and K216 each coordinate Ni(2+). N6-carboxylysine is present on K216. H218 contributes to the substrate binding site. 2 residues coordinate Ni(2+): H245 and H271. H319 acts as the Proton donor in catalysis. D359 provides a ligand contact to Ni(2+).

This sequence belongs to the metallo-dependent hydrolases superfamily. Urease alpha subunit family. As to quaternary structure, heterotrimer of UreA (gamma), UreB (beta) and UreC (alpha) subunits. Three heterotrimers associate to form the active enzyme. It depends on Ni cation as a cofactor. Carboxylation allows a single lysine to coordinate two nickel ions.

The protein localises to the cytoplasm. The enzyme catalyses urea + 2 H2O + H(+) = hydrogencarbonate + 2 NH4(+). The protein operates within nitrogen metabolism; urea degradation; CO(2) and NH(3) from urea (urease route): step 1/1. This chain is Urease subunit alpha 1, found in Psychrobacter cryohalolentis (strain ATCC BAA-1226 / DSM 17306 / VKM B-2378 / K5).